The chain runs to 307 residues: MIKKRSILIVTRKSPLALWQAEFVKQQIENSHPHLACQILGCTTQGDRLTTEKLVDSGGKDLFVKDLQKALLNRDADIAVHSIKDMSACDGPELMVGAFIRREDPRDVLIVKGELSTLPPHAVIGTSSPRRQCQLKKFQPGCKIKEIRGNVGTRLAKLDAGHYEAIVLAAAGLKRLGLENRIHYYFDPHEFIPAIGQGAIGVECRSDDHEMQTLLKSLDHRETRLCVTAERAVNEKLGGDCFTPIAAHAIIKNDQLSLFAMLGKIDGRVIIRATEIGNSEEAQRIGFKVASQLLEQGGDSLLRELKQ.

C241 carries the post-translational modification S-(dipyrrolylmethanemethyl)cysteine.

This sequence belongs to the HMBS family. As to quaternary structure, monomer. Requires dipyrromethane as cofactor.

It carries out the reaction 4 porphobilinogen + H2O = hydroxymethylbilane + 4 NH4(+). The protein operates within porphyrin-containing compound metabolism; protoporphyrin-IX biosynthesis; coproporphyrinogen-III from 5-aminolevulinate: step 2/4. Its function is as follows. Tetrapolymerization of the monopyrrole PBG into the hydroxymethylbilane pre-uroporphyrinogen in several discrete steps. The chain is Porphobilinogen deaminase from Coxiella burnetii (strain CbuK_Q154) (Coxiella burnetii (strain Q154)).